A 29-amino-acid chain; its full sequence is Cytochrome b6-f complex subunit 8 (29 aa).

A helical transmembrane segment spans residues 3–23; the sequence is IVSLAWASLMVVFTFSLSLVV.

It belongs to the PetN family. The 4 large subunits of the cytochrome b6-f complex are cytochrome b6, subunit IV (17 kDa polypeptide, PetD), cytochrome f and the Rieske protein, while the 4 small subunits are PetG, PetL, PetM and PetN. The complex functions as a dimer.

It localises to the plastid. The protein localises to the chloroplast thylakoid membrane. Its function is as follows. Component of the cytochrome b6-f complex, which mediates electron transfer between photosystem II (PSII) and photosystem I (PSI), cyclic electron flow around PSI, and state transitions. The chain is Cytochrome b6-f complex subunit 8 from Coffea arabica (Arabian coffee).